The chain runs to 198 residues: NAD(P)H dehydrogenase (quinone) (198 aa).

Residues 4-189 (VLVLYYSMYG…SIARYQGEYV (186 aa)) form the Flavodoxin-like domain. FMN-binding positions include 10–15 (SMYGHI) and 78–80 (TRF). Tyr12 contacts NAD(+). Trp98 serves as a coordination point for substrate. Residues 113 to 118 (STGTGG) and His133 contribute to the FMN site.

The protein belongs to the WrbA family. It depends on FMN as a cofactor.

It carries out the reaction a quinone + NADH + H(+) = a quinol + NAD(+). It catalyses the reaction a quinone + NADPH + H(+) = a quinol + NADP(+). The protein is NAD(P)H dehydrogenase (quinone) of Shigella dysenteriae serotype 1 (strain Sd197).